Here is a 493-residue protein sequence, read N- to C-terminus: Acetylcholine receptor subunit epsilon (493 aa).

Positions 1 to 20 (MARAPLGVLLLLGLLGRGVG) are cleaved as a signal peptide. Over 21–239 (KNEELRLYHH…VIYSLIIRRK (219 aa)) the chain is Extracellular. Residues Asn86 and Asn161 are each glycosylated (N-linked (GlcNAc...) asparagine). A disulfide bond links Cys148 and Cys162. The helical transmembrane segment at 240–264 (PLFYVINIIVPCVLISGLVLLAYFL) threads the bilayer. The Cytoplasmic segment spans residues 265 to 272 (PAQAGGQK). Residues 273–291 (CTVSINVLLAQTVFLFLIA) form a helical membrane-spanning segment. The Extracellular segment spans residues 292–306 (QKIPETSLSVPLLGR). A helical transmembrane segment spans residues 307–328 (FLIFVMVVATLIVMNCVIVLNV). Residues 329–456 (SQRTPTTHAM…WVRMGNALDN (128 aa)) lie on the Cytoplasmic side of the membrane. Residues 457–480 (ICFWAALVLFSVGSSLIFLGAYFN) traverse the membrane as a helical segment. Residues 481–493 (RVPDLPYAPCIQP) lie on the Extracellular side of the membrane.

The protein belongs to the ligand-gated ion channel (TC 1.A.9) family. Acetylcholine receptor (TC 1.A.9.1) subfamily. Epsilon/CHRNE sub-subfamily. As to quaternary structure, pentamer of two alpha chains, and one each of the beta, delta, and gamma (in immature muscle) or epsilon (in mature muscle) chains. The muscle heteropentamer composed of alpha-1, beta-1, delta, epsilon subunits interacts with the alpha-conotoxin ImII.

The protein localises to the postsynaptic cell membrane. It is found in the cell membrane. It carries out the reaction K(+)(in) = K(+)(out). The catalysed reaction is Na(+)(in) = Na(+)(out). In terms of biological role, after binding acetylcholine, the AChR responds by an extensive change in conformation that affects all subunits and leads to opening of an ion-conducting channel across the plasma membrane. This chain is Acetylcholine receptor subunit epsilon, found in Homo sapiens (Human).